Here is a 746-residue protein sequence, read N- to C-terminus: Dystrobrevin alpha (746 aa).

The tract at residues 1–288 (MIEDSGKRGN…SHSNQHQMKE (288 aa)) is interaction with MAGEE1. The ZZ-type zinc finger occupies 238-294 (FHPVECSYCHSESMMGFRYRCQQCHNYQLCQDCFWRGHAGGSHSNQHQMKEYTSWKS). Zn(2+) contacts are provided by Cys243, Cys246, Cys258, Cys261, Cys267, Cys270, His280, and His284. The interval 397-447 (DRLADEHVLIGLYVNMLRNDPPCMLESSNRLDEEHRLIARYAARLAAESSS) is syntrophin-binding region. A coiled-coil region spans residues 458–557 (DISFTIDANK…KLLKEEELKQ (100 aa)). 3 disordered regions span residues 555–577 (LKQGTQGASSPRSSPSHTISRPI), 646–667 (ETESTVDSEFSRPQFEDLAPSP), and 684–721 (YIHGGAASTTHGDMVPEDGDPYTQPEDGNYENESVRQL). Over residues 563–576 (SSPRSSPSHTISRP) the composition is skewed to low complexity. Phosphoserine is present on Ser666.

It belongs to the dystrophin family. Dystrobrevin subfamily. Interacts with dystrophin, utrophin and the syntrophins SNTA1, SNTB1, SNTB2, SNTG1 and SNTG2. Binds dystrobrevin binding protein 1. Interacts with MAGEE1. Interacts with Ctnnal1. The interaction is required for correct localization of both Ctnnal1 and Dtna. As to quaternary structure, does not interact with utrophin. In terms of assembly, does not interact with syntrophin. In terms of processing, phosphorylation of isoform 2 on tyrosine kinase substrate domain present in the C-terminus. In terms of tissue distribution, expressed in skeletal muscle, heart, lung and brain. Sarcolemma and neuromuscular junction in skeletal muscle. Isoform 2 is restricted to the neuromuscular junction. Isoforms 5 and 6 are only expressed in muscle.

It is found in the cytoplasm. It localises to the synapse. Its subcellular location is the cell membrane. Functionally, involved in synapse maturation and required for normal muscle function. This is Dystrobrevin alpha (Dtna) from Mus musculus (Mouse).